We begin with the raw amino-acid sequence, 364 residues long: N-acetyl-gamma-glutamyl-phosphate reductase (364 aa).

C157 is an active-site residue.

This sequence belongs to the NAGSA dehydrogenase family. Type 1 subfamily.

The protein localises to the cytoplasm. It catalyses the reaction N-acetyl-L-glutamate 5-semialdehyde + phosphate + NADP(+) = N-acetyl-L-glutamyl 5-phosphate + NADPH + H(+). It participates in amino-acid biosynthesis; L-arginine biosynthesis; N(2)-acetyl-L-ornithine from L-glutamate: step 3/4. In terms of biological role, catalyzes the NADPH-dependent reduction of N-acetyl-5-glutamyl phosphate to yield N-acetyl-L-glutamate 5-semialdehyde. This Bifidobacterium longum (strain DJO10A) protein is N-acetyl-gamma-glutamyl-phosphate reductase.